A 725-amino-acid chain; its full sequence is Methionine--tRNA ligase (725 aa).

Positions P27–H37 match the 'HIGH' region motif. Zn(2+)-binding residues include C158, C161, C171, and C174. Positions K348–S352 match the 'KMSKS' region motif. K351 serves as a coordination point for ATP. A tRNA-binding domain is found at D619–K725.

This sequence belongs to the class-I aminoacyl-tRNA synthetase family. MetG type 1 subfamily. As to quaternary structure, homodimer. The cofactor is Zn(2+).

It is found in the cytoplasm. It carries out the reaction tRNA(Met) + L-methionine + ATP = L-methionyl-tRNA(Met) + AMP + diphosphate. In terms of biological role, is required not only for elongation of protein synthesis but also for the initiation of all mRNA translation through initiator tRNA(fMet) aminoacylation. This is Methionine--tRNA ligase from Burkholderia mallei (strain NCTC 10247).